The primary structure comprises 1333 residues: MRNLKLHRTLEFRDIQAPGKPQCFCLRAEQGTVLIGSERGLTEVDPVRREVKTEISLVAEGFLPEDGSGCIVGIQDLLDQESVCVATASGDVIVCNLSTQQLECVGSVASGISVMSWSPDQELLLLATAQQTLIMMTKDFEVIAEEQIHQDDFGEGKFVTVGWGSKQTQFHGSEGRPTAFPVQLPENALPWDDRRPHITWRGDGQYFAVSVVCRQTEARKIRVWNREFALQSTSESVPGLGPALAWKPSGSLIASTQDKPNQQDVVFFEKNGLLHGHFTLPFLKDEVKVNDLLWNADSSVLAIWLEDLPKEDSSTLKSYVQLWTVGNYHWYLKQSLPFSTTGKNQIVSLLWDPVTPCRLHVLCTGWRYLCCDWHWTTDRSSGNSANDLANVAVIDGNRVLVTVFRQTVVPPPMCTYRLLIPHPVNQVIFSAHLGNDLAVLDASNQISVYKCGDKPNMDSTVKLGAVGGNGFKVPLTTPHLEKRYSIQFGNNEEEEEEEVNALQLSFLTWVEDDTFLAISYSHSSSQSIIHHLTVTHSEVDEEQGQLDVSSSVTVDGVVIGLCCCSKTKSLAVQLADGQVLKYLWESPSLAVEPWKNSEGIPVRFVHPCTQMEVATIGGEECVLGLTDRCRFFINDTEVASNITSFAVCDDFLLVTTHSHTCQVFSLSGASLKMLQAALSGSHEASGEILRKVERGSRIVTVVPQDTKLILQMPRGNLEVVHHRALVLAQIRKWLDKLMFKEAFECMRKLRINLNLIHDHNPKVFLENVETFVKQIDSVNHINLFFTELREEDVTKTMYPPPITKSVQVSTHPDGKKLDLICDAMRAAMEAINPRKFCLSILTSHVKKTTPELEIVLQKVQELQGNLPFDPESVSVEEALKYLLLLVDVNELFNHSLGTYDFNLVLMVAEKSQKDPKEYLPFLNTLKKMETNYQRFTIDKYLKRYEKALGHLSKCGPEYFTECLNLIKDKNLYKEALKLYRPDSPQYQAVSMAYGEHLMQEHLYEPAGLVFARCGAQEKALEAFLACGSWQQALCVAAQLQMSKDKVAGLARTLAGKLVEQRKHSEAATVLEQYAQDYEEAVLLLLEGSAWEEALRLVYKYDRVDIIETSVKPSILEAQKNYMDFLDSETATFIRHKNRLQVVRALRRQAPQVHVDHEVAHGPESDLFSETSSIMSGSEMSGRYSHSNSRISARSSKNRRKAERKKHSLKEGSPLEGLALLEALSEVVQSVEKLKDEVRAILKVLFLFEFEEQAKELQRAFESTLQLMERAVPEIWTPAGQQSSTTPVLGPSSTANSITASYQQQKTCVPALDAGVYMPPKMDPRSQWKLSLLE.

S805, S1172, and S1175 each carry phosphoserine. Residues 886 to 1333 (VDVNELFNHS…RSQWKLSLLE (448 aa)) form a mediates dimerization region. The tract at residues 1175–1209 (SGSEMSGRYSHSNSRISARSSKNRRKAERKKHSLK) is disordered. The required for binding to tRNA stretch occupies residues 1192–1210 (ARSSKNRRKAERKKHSLKE). Positions 1195-1207 (SKNRRKAERKKHS) are enriched in basic residues.

It belongs to the ELP1/IKA1 family. Homodimer; dimerization promotes ELP1 stability and elongator complex formation. Component of the elongator complex which consists of ELP1, ELP2, ELP3, ELP4, ELP5 and ELP6. Interacts preferentially with MAP3K14/NIK followed by IKK-alpha and IKK-beta. Phosphorylated. As to expression, in the testis, expression is restricted to germ cells during spermatogenesis with no expression detected in somatic cells such as Sertoli cells or Leydig cells (at protein level). In the ovary, expressed in oocytes of primary, secondary and antral follicles (at protein level). Widely expressed in adult tissues with highest levels in brain and also expressed at all embryonic stages.

The protein resides in the cytoplasm. It localises to the nucleus. It participates in tRNA modification; 5-methoxycarbonylmethyl-2-thiouridine-tRNA biosynthesis. Component of the elongator complex which is required for multiple tRNA modifications, including mcm5U (5-methoxycarbonylmethyl uridine), mcm5s2U (5-methoxycarbonylmethyl-2-thiouridine), and ncm5U (5-carbamoylmethyl uridine). The elongator complex catalyzes the formation of carboxymethyluridine in the wobble base at position 34 in tRNAs. Regulates the migration and branching of projection neurons in the developing cerebral cortex, through a process depending on alpha-tubulin acetylation. ELP1 binds to tRNA, mediating interaction of the elongator complex with tRNA. May act as a scaffold protein that assembles active IKK-MAP3K14 complexes (IKKA, IKKB and MAP3K14/NIK). The chain is Elongator complex protein 1 (Elp1) from Mus musculus (Mouse).